The primary structure comprises 394 residues: Elongation factor Tu 2 (394 aa).

Positions 10–204 (KPHVNVGTIG…YLDSYIPEPE (195 aa)) constitute a tr-type G domain. The interval 19 to 26 (GHVDHGKT) is G1. 19–26 (GHVDHGKT) provides a ligand contact to GTP. Thr26 provides a ligand contact to Mg(2+). Residues 60-64 (GITIN) are G2. Positions 81-84 (DCPG) are G3. GTP contacts are provided by residues 81–85 (DCPGH) and 136–139 (NKCD). Residues 136–139 (NKCD) form a G4 region. The segment at 174-176 (SAL) is G5.

It belongs to the TRAFAC class translation factor GTPase superfamily. Classic translation factor GTPase family. EF-Tu/EF-1A subfamily. As to quaternary structure, monomer.

The protein localises to the cytoplasm. The catalysed reaction is GTP + H2O = GDP + phosphate + H(+). Functionally, GTP hydrolase that promotes the GTP-dependent binding of aminoacyl-tRNA to the A-site of ribosomes during protein biosynthesis. The chain is Elongation factor Tu 2 from Yersinia pseudotuberculosis serotype O:1b (strain IP 31758).